We begin with the raw amino-acid sequence, 321 residues long: Anthranilate phosphoribosyltransferase (321 aa).

5-phospho-alpha-D-ribose 1-diphosphate contacts are provided by residues Gly72, 75–76, Thr80, 82–85, 99–107, and Ser111; these read GD, NVST, and KHGNVSITS. Residue Gly72 coordinates anthranilate. Mg(2+) is bound at residue Ser84. Asn102 is an anthranilate binding site. Residue Arg157 participates in anthranilate binding. Positions 216 and 217 each coordinate Mg(2+).

It belongs to the anthranilate phosphoribosyltransferase family. In terms of assembly, homodimer. Mg(2+) is required as a cofactor.

It carries out the reaction N-(5-phospho-beta-D-ribosyl)anthranilate + diphosphate = 5-phospho-alpha-D-ribose 1-diphosphate + anthranilate. It participates in amino-acid biosynthesis; L-tryptophan biosynthesis; L-tryptophan from chorismate: step 2/5. Its function is as follows. Catalyzes the transfer of the phosphoribosyl group of 5-phosphorylribose-1-pyrophosphate (PRPP) to anthranilate to yield N-(5'-phosphoribosyl)-anthranilate (PRA). The polypeptide is Anthranilate phosphoribosyltransferase (Methanococcus maripaludis (strain C7 / ATCC BAA-1331)).